Consider the following 509-residue polypeptide: Methionine--tRNA ligase (509 aa).

The short motif at 12 to 22 (YYPSGDLHLGH) is the 'HIGH' region element. Positions 302–306 (KMSKS) match the 'KMSKS' region motif. Residue K305 coordinates ATP.

This sequence belongs to the class-I aminoacyl-tRNA synthetase family. MetG type 2B subfamily. In terms of assembly, monomer.

The protein localises to the cytoplasm. It carries out the reaction tRNA(Met) + L-methionine + ATP = L-methionyl-tRNA(Met) + AMP + diphosphate. In terms of biological role, is required not only for elongation of protein synthesis but also for the initiation of all mRNA translation through initiator tRNA(fMet) aminoacylation. The sequence is that of Methionine--tRNA ligase (metG) from Mycoplasmopsis pulmonis (strain UAB CTIP) (Mycoplasma pulmonis).